A 469-amino-acid polypeptide reads, in one-letter code: 3-isopropylmalate dehydratase large subunit (469 aa).

The [4Fe-4S] cluster site is built by cysteine 350, cysteine 410, and cysteine 413.

It belongs to the aconitase/IPM isomerase family. LeuC type 1 subfamily. In terms of assembly, heterodimer of LeuC and LeuD. Requires [4Fe-4S] cluster as cofactor.

The catalysed reaction is (2R,3S)-3-isopropylmalate = (2S)-2-isopropylmalate. It functions in the pathway amino-acid biosynthesis; L-leucine biosynthesis; L-leucine from 3-methyl-2-oxobutanoate: step 2/4. In terms of biological role, catalyzes the isomerization between 2-isopropylmalate and 3-isopropylmalate, via the formation of 2-isopropylmaleate. The chain is 3-isopropylmalate dehydratase large subunit from Rhizobium meliloti (strain 1021) (Ensifer meliloti).